The primary structure comprises 280 residues: MEVIRIPRIMREISKELRFKGKSIGFIPTMGALHEGHLSLIRRAKEENDIVIVSIFVNPTQFAQGEDYEKYPRDVELDKEKLEALAIDYLFLPDVNSLYPEGYSTYVVVEGLSDKLCGIFRPGHFRGVATIVCKLFNIVKPLRAYFGQKDYQQSLIIRRMVEDLNFDVEIIVCPTVREQDGLAMSSRNLYLNEKERQSATVIYKALKEGERLLNEGEKPLDVKLKMHEIFKNEPLIREIQYAGVYDPLTLEEVKERQNKYLLAVALKIGDTRLIDNLIVE.

30-37 (MGALHEGH) is a binding site for ATP. His-37 (proton donor) is an active-site residue. Gln-61 contributes to the (R)-pantoate binding site. Position 61 (Gln-61) interacts with beta-alanine. 147–150 (GQKD) contacts ATP. A (R)-pantoate-binding site is contributed by Gln-153. ATP-binding positions include Val-176 and 184–187 (MSSR).

Belongs to the pantothenate synthetase family. As to quaternary structure, homodimer.

It localises to the cytoplasm. The catalysed reaction is (R)-pantoate + beta-alanine + ATP = (R)-pantothenate + AMP + diphosphate + H(+). The protein operates within cofactor biosynthesis; (R)-pantothenate biosynthesis; (R)-pantothenate from (R)-pantoate and beta-alanine: step 1/1. Its function is as follows. Catalyzes the condensation of pantoate with beta-alanine in an ATP-dependent reaction via a pantoyl-adenylate intermediate. The sequence is that of Pantothenate synthetase from Thermodesulfovibrio yellowstonii (strain ATCC 51303 / DSM 11347 / YP87).